The chain runs to 1499 residues: Streptococcal surface protein B (1499 aa).

The signal sequence occupies residues 1-37 (MQKREVFGFRKSKVAKTLCGAVLGAALIAIADQQVLA). The segment at 50–84 (AVTTTGNPATNLPEAQGEATEAASQSQAQAGSKDG) is disordered. Ag I/II A repeat units follow at residues 145-219 (KKTT…QKAN), 220-301 (EDSQ…KKAK), 302-383 (EDND…KQAN), and 384-465 (ATNE…KKDF). Disordered stretches follow at residues 689–709 (YADS…SEWD), 763–907 (TAPT…TPPV), and 1409–1472 (RTTT…TGTN). Residues 694–705 (NAEKSRGARWDT) are compositionally biased toward basic and acidic residues. A compositionally biased stretch (pro residues) spans 789-799 (PTPPVKTPDQP). A compositionally biased stretch (basic and acidic residues) spans 800 to 815 (EPSKPEEPTYETEKPL). Residues 828 to 838 (PTPPVKIPDQP) are compositionally biased toward pro residues. The span at 839–854 (EPSKPEEPTYETEKPL) shows a compositional bias: basic and acidic residues. Pro residues-rich tracts occupy residues 867-877 (PTPPVKTPDQP) and 888-907 (DPLP…TPPV). Positions 1428–1450 (KPKDPDKPETPKEPKVPSPKVED) are enriched in basic and acidic residues. The short motif at 1466–1470 (LPKTG) is the LPXTG sorting signal element. Position 1469 is a pentaglycyl murein peptidoglycan amidated threonine (T1469). Residues 1470-1499 (GTNDATYMPYLGLAALVGFLGLGLAKRKED) constitute a propeptide, removed by sortase.

It belongs to the antigen I/II family.

It localises to the secreted. The protein resides in the cell wall. Its subcellular location is the cell surface. Its function is as follows. Adhesin that mediates binding of bacteria to a variety of host cells. Plays a role in the bacterial invasion of dentinal tubules. A host immunostimulatory component, it modulates the innate immunity response. Plays a protective role against some antibiotics and cationic antimicrobial peptides (histatin-5, HTN3, but not beta-defensin 4A, DEFB4A). This chain is Streptococcal surface protein B, found in Streptococcus gordonii (strain Challis / ATCC 35105 / BCRC 15272 / CH1 / DL1 / V288).